A 129-amino-acid chain; its full sequence is MVKAATRVRKKVKKNVAEGIAHVHASFNNTIVTITDRQGNALSWATSGGAGFKGSRKSTPFAAQVAAEQAGRAAQEYGVKNLEVRIKGPGPGRESAVRALNAAGFKITSISDVTPVPHNGCRPPKKRRI.

The protein belongs to the universal ribosomal protein uS11 family. In terms of assembly, part of the 30S ribosomal subunit. Interacts with proteins S7 and S18. Binds to IF-3.

Located on the platform of the 30S subunit, it bridges several disparate RNA helices of the 16S rRNA. Forms part of the Shine-Dalgarno cleft in the 70S ribosome. The protein is Small ribosomal subunit protein uS11 of Nitrosospira multiformis (strain ATCC 25196 / NCIMB 11849 / C 71).